Reading from the N-terminus, the 257-residue chain is S-methyl-5'-thioadenosine phosphorylase (257 aa).

Phosphate contacts are provided by residues Ser10 and 50–51 (RH). Cys130 and Cys195 are oxidised to a cystine. Substrate is bound at residue Met180. Thr181 serves as a coordination point for phosphate. 204–206 (DYD) is a substrate binding site. Cysteines 246 and 248 form a disulfide.

Belongs to the PNP/MTAP phosphorylase family. MTAP subfamily. Homohexamer. Dimer of a homotrimer.

It catalyses the reaction S-methyl-5'-thioadenosine + phosphate = 5-(methylsulfanyl)-alpha-D-ribose 1-phosphate + adenine. The protein operates within amino-acid biosynthesis; L-methionine biosynthesis via salvage pathway; S-methyl-5-thio-alpha-D-ribose 1-phosphate from S-methyl-5'-thioadenosine (phosphorylase route): step 1/1. Functionally, catalyzes the reversible phosphorylation of S-methyl-5'-thioadenosine (MTA) to adenine and 5-methylthioribose-1-phosphate. Involved in the breakdown of MTA, a major by-product of polyamine biosynthesis. Responsible for the first step in the methionine salvage pathway after MTA has been generated from S-adenosylmethionine. Has broad substrate specificity with 6-aminopurine nucleosides as preferred substrates. This is S-methyl-5'-thioadenosine phosphorylase from Pyrococcus furiosus (strain ATCC 43587 / DSM 3638 / JCM 8422 / Vc1).